Reading from the N-terminus, the 195-residue chain is Protein GrpE (195 aa).

Belongs to the GrpE family. As to quaternary structure, homodimer.

It localises to the cytoplasm. Its function is as follows. Participates actively in the response to hyperosmotic and heat shock by preventing the aggregation of stress-denatured proteins, in association with DnaK and GrpE. It is the nucleotide exchange factor for DnaK and may function as a thermosensor. Unfolded proteins bind initially to DnaJ; upon interaction with the DnaJ-bound protein, DnaK hydrolyzes its bound ATP, resulting in the formation of a stable complex. GrpE releases ADP from DnaK; ATP binding to DnaK triggers the release of the substrate protein, thus completing the reaction cycle. Several rounds of ATP-dependent interactions between DnaJ, DnaK and GrpE are required for fully efficient folding. In Francisella tularensis subsp. holarctica (strain FTNF002-00 / FTA), this protein is Protein GrpE.